Consider the following 537-residue polypeptide: Tyrosine-protein phosphatase CDC14 homolog (537 aa).

The Tyrosine-protein phosphatase domain maps to 182–345; sequence DFNWISPKFI…QVHFRAYFYE (164 aa). Residue cysteine 286 is the Phosphocysteine intermediate of the active site. Residues 359 to 537 form a disordered region; the sequence is EPLATPPRHP…PKPSKSRLIS (179 aa). Over residues 370–382 the composition is skewed to polar residues; sequence NATNGTSQSNIST. A compositionally biased stretch (low complexity) spans 400–411; sequence PPSARRLPSASS. The segment covering 421–437 has biased composition (polar residues); sequence ASKQSIQNENKASYSSY. A Phosphothreonine modification is found at threonine 453. Phosphoserine occurs at positions 468 and 470. Positions 490 to 502 are enriched in low complexity; the sequence is RRTSGNRWSSGSS. Residue serine 513 is modified to Phosphoserine. Over residues 514–523 the composition is skewed to polar residues; the sequence is MSSLNNTSNG. A compositionally biased stretch (basic residues) spans 526–537; sequence AKPKPSKSRLIS.

It belongs to the protein-tyrosine phosphatase family. Non-receptor class CDC14 subfamily. Interacts with ark1 at the kinetochores. Interacts with bir1, cdc25, mid1, nbl1, pic1, and rad24. Post-translationally, phosphorylated by cds1, chk1, pmk1, and cdc2 upon Hydroxylurea and H(2)O(2) stress treatment. Phosphorylation regulates the nucleolar-to-nucleoplasmic transition. Is able to autodephosphorylate.

The protein resides in the nucleus. Its subcellular location is the nucleolus. The protein localises to the cytoplasm. It localises to the cytoskeleton. It is found in the microtubule organizing center. The protein resides in the spindle pole body. It carries out the reaction O-phospho-L-tyrosyl-[protein] + H2O = L-tyrosyl-[protein] + phosphate. Protein phosphatase which antagonizes mitotic cyclin-dependent kinase cdc2, the inactivation of which is essential for exit from mitosis. To access its substrates, is released from nucleolar sequestration during mitosis. Plays an essential in coordinating the nuclear division cycle with cytokinesis through the cytokinesis checkpoint. Involved in chromosome segregation, where it is required for meiosis I spindle dissambly as well as for establishing two consecutive chromosome segregation phases. Allows damaged actomyosin rings to be maintained to facilitate completion of cell division in response to minor perturbation of the cell division machinery. Dephosphorylates the mitotic inducer cdc25 for its rapid degradation. Down-regulation of cdc25 activity ensures a prompt inactivation of mitotic cdc2 complexes to trigger cell division. Also dephosphorylates cdc2-phosphorylated nsk1, allowing nsk1-binding to kinetochores and spindle. Dephosphorylates ase1, which is essential for spindle midzone assembly and for continuous extension of the anaphase spindle. Tethered to the contractile ring by mid1, where it dephosphorylates cdc15. The sequence is that of Tyrosine-protein phosphatase CDC14 homolog (clp1) from Schizosaccharomyces pombe (strain 972 / ATCC 24843) (Fission yeast).